The primary structure comprises 270 residues: Phosphatidylglycerol--prolipoprotein diacylglyceryl transferase (270 aa).

4 consecutive transmembrane segments (helical) span residues 18–38 (ITIYWYGVIIGTGVLIGLWLA), 55–75 (LVLFAVPIAIVCARAYYVLFE), 90–110 (WQGGLAIHGGLIGAVATGAVF), and 115–135 (GLSFWKLADIAAPSIILGQAI). Arg137 is a binding site for a 1,2-diacyl-sn-glycero-3-phospho-(1'-sn-glycerol). Helical transmembrane passes span 177–197 (HPTFLYESLWNLVGFFLLLWL), 205–225 (GELFLSYLIWYSVGRFWIEGM), and 236–256 (LRAAQVVSVTLIVLSIALWIV).

It belongs to the Lgt family.

The protein localises to the cell membrane. It carries out the reaction L-cysteinyl-[prolipoprotein] + a 1,2-diacyl-sn-glycero-3-phospho-(1'-sn-glycerol) = an S-1,2-diacyl-sn-glyceryl-L-cysteinyl-[prolipoprotein] + sn-glycerol 1-phosphate + H(+). It participates in protein modification; lipoprotein biosynthesis (diacylglyceryl transfer). In terms of biological role, catalyzes the transfer of the diacylglyceryl group from phosphatidylglycerol to the sulfhydryl group of the N-terminal cysteine of a prolipoprotein, the first step in the formation of mature lipoproteins. The chain is Phosphatidylglycerol--prolipoprotein diacylglyceryl transferase from Geobacillus kaustophilus (strain HTA426).